A 98-amino-acid polypeptide reads, in one-letter code: MPRSLKKGPFIEGKLEKRILDMNSREEKKVVKTWARSSMISPDFVGHTVAVHNGKTHVPVYISENMVGHKLGEFAPTRTYRGHAGGKAEKGGSAPKRK.

The interval 77–98 (TRTYRGHAGGKAEKGGSAPKRK) is disordered.

Belongs to the universal ribosomal protein uS19 family.

Its function is as follows. Protein S19 forms a complex with S13 that binds strongly to the 16S ribosomal RNA. The polypeptide is Small ribosomal subunit protein uS19 (Prosthecochloris aestuarii (strain DSM 271 / SK 413)).